The sequence spans 293 residues: Forkhead box protein N5 (293 aa).

The disordered stretch occupies residues 104–152 (TSPPLQLQRQLSNDYSTVEDSEDEAPTSCSDVLTDDDDSYNPWQPKHKR). Positions 106–119 (PPLQLQRQLSNDYS) are enriched in polar residues. Residues 176–273 (RPPLNYCNLI…NEMHALSDDL (98 aa)) constitute a DNA-binding region (fork-head).

It is found in the nucleus. In Xenopus tropicalis (Western clawed frog), this protein is Forkhead box protein N5.